The sequence spans 500 residues: Probable glycine dehydrogenase (decarboxylating) subunit 2 (500 aa).

The tract at residues 1-25 (MLIFEHSRPGRRNYSQSPKAAEATD) is disordered. At lysine 263 the chain carries N6-(pyridoxal phosphate)lysine.

Belongs to the GcvP family. C-terminal subunit subfamily. The glycine cleavage system is composed of four proteins: P, T, L and H. In this organism, the P 'protein' is a heterodimer of two subunits. It depends on pyridoxal 5'-phosphate as a cofactor.

It carries out the reaction N(6)-[(R)-lipoyl]-L-lysyl-[glycine-cleavage complex H protein] + glycine + H(+) = N(6)-[(R)-S(8)-aminomethyldihydrolipoyl]-L-lysyl-[glycine-cleavage complex H protein] + CO2. The glycine cleavage system catalyzes the degradation of glycine. The P protein binds the alpha-amino group of glycine through its pyridoxal phosphate cofactor; CO(2) is released and the remaining methylamine moiety is then transferred to the lipoamide cofactor of the H protein. In Nitrosospira multiformis (strain ATCC 25196 / NCIMB 11849 / C 71), this protein is Probable glycine dehydrogenase (decarboxylating) subunit 2.